The following is a 239-amino-acid chain: Norbelladine 4'-O-methyltransferase 3 (239 aa).

S-adenosyl-L-methionine is bound by residues Val-55, Glu-77, 79 to 80 (GV), Ser-85, Asp-103, and Ala-132. Asp-155 contributes to the a divalent metal cation binding site. Asp-157 serves as a coordination point for S-adenosyl-L-methionine. A divalent metal cation-binding residues include Asp-181 and Asn-182.

Belongs to the class I-like SAM-binding methyltransferase superfamily. Cation-dependent O-methyltransferase family. Mg(2+) is required as a cofactor.

It catalyses the reaction norbelladine + S-adenosyl-L-methionine = 4'-O-methylnorbelladine + S-adenosyl-L-homocysteine + H(+). It functions in the pathway alkaloid biosynthesis. 4'-O-methyltransferase converting norbelladine to 4'-O-methylnorbelladine. 4'-O-methylnorbelladine is a precursor to all Amaryllidaceae alkaloids such as galanthamine, lycorine and haemanthamine, and including haemanthamine- and crinamine-type alkaloids, promising anticancer agents. This is Norbelladine 4'-O-methyltransferase 3 from Narcissus aff. pseudonarcissus MK-2014 (Daffodil).